A 141-amino-acid polypeptide reads, in one-letter code: MSLQISILTPERPFWNGQADEIILPTETGEMGVLKNHAPIITGLNVGAMLIRGGQASGSKDEWNSYAIMGGFALVKQNQVTILANEAVSAENINPEEAKDAFETAKANLEKAEGVKEKVEANFAYKRAKARYQVVKVLKKI.

The protein belongs to the ATPase epsilon chain family. In terms of assembly, F-type ATPases have 2 components, F(1) - the catalytic core - and F(0) - the membrane proton channel. F(1) has five subunits: alpha(3), beta(3), gamma(1), delta(1), epsilon(1). F(0) has four main subunits: a(1), b(1), b'(1) and c(10-14). The alpha and beta chains form an alternating ring which encloses part of the gamma chain. F(1) is attached to F(0) by a central stalk formed by the gamma and epsilon chains, while a peripheral stalk is formed by the delta, b and b' chains.

It is found in the plastid. The protein localises to the chloroplast thylakoid membrane. In terms of biological role, f(1)F(0) ATP synthase produces ATP from ADP in the presence of a proton or sodium gradient. F-type ATPases consist of two structural domains, F(1) containing the extramembraneous catalytic core and F(0) containing the membrane proton channel, linked together by a central stalk and a peripheral stalk. During catalysis, ATP synthesis in the catalytic domain of F(1) is coupled via a rotary mechanism of the central stalk subunits to proton translocation. The chain is ATP synthase epsilon chain, chloroplastic from Chlamydomonas reinhardtii (Chlamydomonas smithii).